A 155-amino-acid chain; its full sequence is MAEGETTTFTALTEKFNLPLGNYKKPKLLYCSNGGYFLRILPDGTVDGTKDRSDQHIQLQLCAESIGEVYIKSTETGQFLAMDTDGLLYGSQTPNEECLFLERLEENHYNTYISKKHAEKHWFVGLKKNGRSKLGPRTHFGQKAILFLPLPVSSD.

Position 2 is an N-acetylalanine (Ala-2). The short motif at 24–27 (KKPK) is the Nuclear localization signal element. Heparin is bound by residues 24 to 28 (KKPKL) and 113 to 116 (ISKK).

Belongs to the heparin-binding growth factors family. In terms of assembly, monomer. Homodimer. Interacts with FGFR1, FGFR2, FGFR3 and FGFR4. Affinity between fibroblast growth factors (FGFs) and their receptors is increased by heparan sulfate glycosaminoglycans that function as coreceptors. Found in a complex with FGFBP1, FGF1 and FGF2. Interacts with FGFBP1. Part of a Cu(2+)-dependent multiprotein aggregate containing FGF1, S100A13 and SYT1. Interacts with S100A13. Interacts with FGFBP1. Interacts with LRRC59. Interacts with CSNKA, CSNKB and FIBP. While binding with LRRC59, CSNKA and FIBP seem mutually exclusive, CSNKB and FIBP may cooperatively interact with FGF1. Interacts with SYT1. Forms a ternary complex with FGFR1 and ITGAV:ITGB3 and induces the recruitment of PTPN11 to the complex. In the nucleus, phosphorylated by PKC/PRKCD.

Its subcellular location is the secreted. It is found in the cytoplasm. It localises to the cell cortex. The protein localises to the cytosol. The protein resides in the nucleus. Functionally, plays an important role in the regulation of cell survival, cell division, angiogenesis, cell differentiation and cell migration. Functions as a potent mitogen in vitro. Acts as a ligand for FGFR1 and integrins. Binds to FGFR1 in the presence of heparin leading to FGFR1 dimerization and activation via sequential autophosphorylation on tyrosine residues which act as docking sites for interacting proteins, leading to the activation of several signaling cascades. Binds to integrin ITGAV:ITGB3. Its binding to integrin, subsequent ternary complex formation with integrin and FGFR1, and the recruitment of PTPN11 to the complex are essential for FGF1 signaling. Induces the phosphorylation and activation of FGFR1, FRS2, MAPK3/ERK1, MAPK1/ERK2 and AKT1. Can induce angiogenesis. This chain is Fibroblast growth factor 1 (FGF1), found in Bos taurus (Bovine).